Reading from the N-terminus, the 597-residue chain is uncharacterized protein (597 aa).

The 151-residue stretch at 48–198 folds into the Helicase ATP-binding domain; that stretch reads LHPYNPYSSL…DSILSLTKET (151 aa). 61–68 contacts ATP; that stretch reads YDVGLGKT. The DEVH box signature appears at 146-149; it reads DEVH. A Helicase C-terminal domain is found at 275 to 467; that stretch reads KINAFINSIK…DIPKIDNEMV (193 aa).

Belongs to the helicase family.

Functionally, the presence of the two linear plasmids, termed pGKL1 and pGKL2, in strains of Kluyveromyces lactis confers the killer phenotype to the host cell, by promoting the secretion of a toxin able to inhibit the growth of sensitive strains. This is an uncharacterized protein from Kluyveromyces lactis (strain ATCC 8585 / CBS 2359 / DSM 70799 / NBRC 1267 / NRRL Y-1140 / WM37) (Yeast).